The following is a 583-amino-acid chain: Epsin-2 (583 aa).

A 1,2-diacyl-sn-glycero-3-phospho-(1D-myo-inositol-4,5-bisphosphate) is bound by residues Arg-8, Lys-11, Arg-25, Asn-30, Arg-63, and His-73. The region spanning 12 to 144 (NIVNSYSEAE…KDEERLKVER (133 aa)) is the ENTH domain. Over residues 165–181 (QITFGRGSSQPNLSISH) the composition is skewed to polar residues. The interval 165–217 (QITFGRGSSQPNLSISHSEQEYGKAGGSPASYHGSTSPRVSSELEQARPQTSG) is disordered. Arg-170 carries the omega-N-methylarginine modification. Ser-173, Ser-192, and Ser-195 each carry phosphoserine. The segment covering 197-216 (HGSTSPRVSSELEQARPQTS) has biased composition (polar residues). UIM domains are found at residues 218–237 (EEEL…AEQE) and 243–262 (GDDL…TVKV). 2 disordered regions span residues 293-384 (SGPV…KPSP) and 411-457 (TSKK…PESF). 4 repeat units span residues 301 to 303 (EPW), 313 to 315 (NPW), 326 to 328 (DPW), and 340 to 342 (DPW). Residues 301-315 (EPWSTGTPANQTNPW) are compositionally biased toward polar residues. The tract at residues 301–377 (EPWSTGTPAN…SDAGKTADAW (77 aa)) is 6 X 3 AA repeats of [DE]-P-W. Residues 346 to 355 (TTASIQSVPK) are compositionally biased toward polar residues. 2 tandem repeats follow at residues 358–360 (DPW) and 375–377 (DAW). Phosphoserine is present on Ser-431. Residues 437 to 448 (SQSLTSASSKPS) show a composition bias toward low complexity. Residue Thr-453 is modified to Phosphothreonine. 2 consecutive repeat copies span residues 482 to 484 (NPF) and 496 to 498 (NPF). The interval 482–581 (NPFLAPGAAA…AQPAGTTNPF (100 aa)) is 3 X 3 AA repeats of N-P-F. At Ser-514 the chain carries Phosphoserine. Copy 3 of the repeat occupies 579–581 (NPF).

It belongs to the epsin family. In terms of assembly, binds AP-2 and clathrin. Interacts with ITSN1. Interacts with UBQLN2. Binds EPS15. Ubiquitinated. Highly expressed in brain. Detected at lower levels in lung, liver, muscle and testis.

It localises to the cytoplasm. In terms of biological role, plays a role in the formation of clathrin-coated invaginations and endocytosis. The sequence is that of Epsin-2 (Epn2) from Rattus norvegicus (Rat).